The chain runs to 210 residues: Large ribosomal subunit protein bL17 (210 aa).

Residues 177 to 210 are disordered; sequence TRSAQRPAFEQDAPESDSAPEAEAKTEEETASAN.

This sequence belongs to the bacterial ribosomal protein bL17 family. Part of the 50S ribosomal subunit. Contacts protein L32.

In Rhodopirellula baltica (strain DSM 10527 / NCIMB 13988 / SH1), this protein is Large ribosomal subunit protein bL17.